The chain runs to 338 residues: S-adenosylmethionine:tRNA ribosyltransferase-isomerase (338 aa).

The protein belongs to the QueA family. Monomer.

It localises to the cytoplasm. It catalyses the reaction 7-aminomethyl-7-carbaguanosine(34) in tRNA + S-adenosyl-L-methionine = epoxyqueuosine(34) in tRNA + adenine + L-methionine + 2 H(+). Its pathway is tRNA modification; tRNA-queuosine biosynthesis. Functionally, transfers and isomerizes the ribose moiety from AdoMet to the 7-aminomethyl group of 7-deazaguanine (preQ1-tRNA) to give epoxyqueuosine (oQ-tRNA). The polypeptide is S-adenosylmethionine:tRNA ribosyltransferase-isomerase (Francisella tularensis subsp. holarctica (strain FTNF002-00 / FTA)).